Here is a 259-residue protein sequence, read N- to C-terminus: Protein SODIUM POTASSIUM ROOT DEFECTIVE 2 (259 aa).

The tract at residues 141 to 165 (PDSITGSVDQDPAKTVEAEAPAGED) is disordered. The span at 151 to 165 (DPAKTVEAEAPAGED) shows a compositional bias: basic and acidic residues. One can recognise an HMA domain in the interval 180–246 (QQVVVLKVSL…KVKNAQFWTN (67 aa)). A metal cation is bound by residues Cys-191 and Cys-194.

In Arabidopsis thaliana (Mouse-ear cress), this protein is Protein SODIUM POTASSIUM ROOT DEFECTIVE 2.